A 286-amino-acid chain; its full sequence is E3 ubiquitin-protein ligase RNF170 (286 aa).

Residues 1-52 (MQRYWRFQDNKIQDICFGVLGESWIQRPVMARYYSEGQSLQQDDSFIEGVSD) are Lumenal-facing. The chain crosses the membrane as a helical span at residues 53–73 (QVLVAVVVSLALTATLLYALL). Over 74–229 (RNVQQNIHPE…GGLFWMFRIR (156 aa)) the chain is Cytoplasmic. An RING-type zinc finger spans residues 115–158 (CPICLHQASFPVETNCGHLFCGSCIIAYWRYGSWLGAISCPICR). A helical transmembrane segment spans residues 230 to 250 (IMLCLMGAFFYLISPLDFVPE). A topological domain (lumenal) is located at residue Ala-251. The helical transmembrane segment at 252–272 (LFGILGFLDDFFVIFLLLIYI) threads the bilayer. The Cytoplasmic portion of the chain corresponds to 273–286 (SIMYREVITQRLTR).

In terms of assembly, constitutively associated with the ERLIN1/ERLIN 2 complex. Interacts with activated ITPR1.

The protein localises to the endoplasmic reticulum membrane. The enzyme catalyses S-ubiquitinyl-[E2 ubiquitin-conjugating enzyme]-L-cysteine + [acceptor protein]-L-lysine = [E2 ubiquitin-conjugating enzyme]-L-cysteine + N(6)-ubiquitinyl-[acceptor protein]-L-lysine.. It participates in protein modification; protein ubiquitination. E3 ubiquitin-protein ligase that plays an essential role in stimulus-induced inositol 1,4,5-trisphosphate receptor type 1 (ITPR1) ubiquitination and degradation via the endoplasmic reticulum-associated degradation (ERAD) pathway. Also involved in ITPR1 turnover in resting cells. Selectively inhibits the TLR3-triggered innate immune response by promoting the 'Lys-48'-linked polyubiquitination and degradation of TLR3. The protein is E3 ubiquitin-protein ligase RNF170 (Rnf170) of Mus musculus (Mouse).